We begin with the raw amino-acid sequence, 242 residues long: Ethanolamine ammonia-lyase small subunit (242 aa).

2 residues coordinate adenosylcob(III)alamin: Val155 and Glu176.

The protein belongs to the EutC family. In terms of assembly, the basic unit is a heterodimer which dimerizes to form tetramers. The heterotetramers trimerize; 6 large subunits form a core ring with 6 small subunits projecting outwards. Adenosylcob(III)alamin serves as cofactor.

It localises to the bacterial microcompartment. It catalyses the reaction ethanolamine = acetaldehyde + NH4(+). Its pathway is amine and polyamine degradation; ethanolamine degradation. Catalyzes the deamination of various vicinal amino-alcohols to oxo compounds. Allows this organism to utilize ethanolamine as the sole source of nitrogen and carbon in the presence of external vitamin B12. The protein is Ethanolamine ammonia-lyase small subunit of Clostridium acetobutylicum (strain ATCC 824 / DSM 792 / JCM 1419 / IAM 19013 / LMG 5710 / NBRC 13948 / NRRL B-527 / VKM B-1787 / 2291 / W).